Reading from the N-terminus, the 660-residue chain is Bifunctional polymyxin resistance protein ArnA (660 aa).

The interval 1-304 (MKTVVFAYHD…TLGLVQGSRL (304 aa)) is formyltransferase ArnAFT. 86-88 (HLI) is a binding site for (6R)-10-formyltetrahydrofolate. His104 serves as the catalytic Proton donor; for formyltransferase activity. Residues Arg114 and 136 to 140 (VKRAD) each bind (6R)-10-formyltetrahydrofolate. The interval 314-660 (RRTRVLILGV…RTVDLTDKPS (347 aa)) is dehydrogenase ArnADH. Residues Asp347 and 368-369 (DI) contribute to the NAD(+) site. UDP-alpha-D-glucuronate is bound by residues Ala393, Tyr398, and 432 to 433 (TS). Glu434 serves as the catalytic Proton acceptor; for decarboxylase activity. Residues Arg460, Asn492, 526–535 (KLIDGGKQKR), and Tyr613 each bind UDP-alpha-D-glucuronate. The Proton donor; for decarboxylase activity role is filled by Arg619.

In the N-terminal section; belongs to the Fmt family. UDP-L-Ara4N formyltransferase subfamily. It in the C-terminal section; belongs to the NAD(P)-dependent epimerase/dehydratase family. UDP-glucuronic acid decarboxylase subfamily. As to quaternary structure, homohexamer, formed by a dimer of trimers.

The enzyme catalyses UDP-alpha-D-glucuronate + NAD(+) = UDP-beta-L-threo-pentopyranos-4-ulose + CO2 + NADH. It carries out the reaction UDP-4-amino-4-deoxy-beta-L-arabinose + (6R)-10-formyltetrahydrofolate = UDP-4-deoxy-4-formamido-beta-L-arabinose + (6S)-5,6,7,8-tetrahydrofolate + H(+). It functions in the pathway nucleotide-sugar biosynthesis; UDP-4-deoxy-4-formamido-beta-L-arabinose biosynthesis; UDP-4-deoxy-4-formamido-beta-L-arabinose from UDP-alpha-D-glucuronate: step 1/3. Its pathway is nucleotide-sugar biosynthesis; UDP-4-deoxy-4-formamido-beta-L-arabinose biosynthesis; UDP-4-deoxy-4-formamido-beta-L-arabinose from UDP-alpha-D-glucuronate: step 3/3. It participates in bacterial outer membrane biogenesis; lipopolysaccharide biosynthesis. Bifunctional enzyme that catalyzes the oxidative decarboxylation of UDP-glucuronic acid (UDP-GlcUA) to UDP-4-keto-arabinose (UDP-Ara4O) and the addition of a formyl group to UDP-4-amino-4-deoxy-L-arabinose (UDP-L-Ara4N) to form UDP-L-4-formamido-arabinose (UDP-L-Ara4FN). The modified arabinose is attached to lipid A and is required for resistance to polymyxin and cationic antimicrobial peptides. In Escherichia coli O1:K1 / APEC, this protein is Bifunctional polymyxin resistance protein ArnA.